A 361-amino-acid polypeptide reads, in one-letter code: MSIDQRLQLITRNAAEIITIDELRKKLESEEKLKGYIGFEPSGLFHIGWLIWTQKVKDLVEAGVNMTLLRATWHAWINDKLGGDLSLIKMAADYTVEVIKNYGVDTTKLNIVDADDMVKEKDYWALVIKVAKNSSLARIKRALTIMGRRAEEAEIDASKLIYPAMQVSDIFYLDLDIALGGTDQRKAHMLARDVAEKMGKKKIVSIHTPLLVGLQGGQRMSITEGMEEDDIQAEIKMSKSKPESAIFVSDSREDVERKIMGAYCPKGVAENNPILQILKYIIFPRYNFVKIERDIRYGGDVEFKDYEELERAYIEGKIHPMDLKKATARRLNEILEPIRKSLERKPEFEEMIQKISKSVTR.

5 residues coordinate L-tyrosine: tyrosine 36, tyrosine 162, glutamine 166, aspartate 169, and glutamine 184. The 'KMSKS' region signature appears at lysine 236–serine 240. Lysine 239 serves as a coordination point for ATP.

Belongs to the class-I aminoacyl-tRNA synthetase family. TyrS type 4 subfamily. Homodimer.

The protein localises to the cytoplasm. It catalyses the reaction tRNA(Tyr) + L-tyrosine + ATP = L-tyrosyl-tRNA(Tyr) + AMP + diphosphate + H(+). Its function is as follows. Catalyzes the attachment of tyrosine to tRNA(Tyr) in a two-step reaction: tyrosine is first activated by ATP to form Tyr-AMP and then transferred to the acceptor end of tRNA(Tyr). The polypeptide is Tyrosine--tRNA ligase (Saccharolobus islandicus (strain M.14.25 / Kamchatka #1) (Sulfolobus islandicus)).